The following is an 874-amino-acid chain: AP-1 complex subunit gamma-1 (874 aa).

The 113-residue stretch at threonine 761–serine 873 folds into the GAE domain.

This sequence belongs to the adaptor complexes large subunit family. Adaptor protein complex 1 (AP-1) is a heterotetramer composed of two large adaptins (gamma-type subunit APL4 and beta-type subunit APL2), a medium adaptin (mu-type subunit APM1) and a small adaptin (sigma-type subunit APS1). AP-1 interacts with clathrin.

The protein localises to the cytoplasmic vesicle. It is found in the clathrin-coated vesicle membrane. Its subcellular location is the golgi apparatus. Functionally, adaptins are components of the adaptor complexes which link clathrin to receptors in coated vesicles. Clathrin-associated protein complexes are believed to interact with the cytoplasmic tails of membrane proteins, leading to their selection and concentration. The AP-1 complex interacts directly with clathrin. Required for apical growth extension. The sequence is that of AP-1 complex subunit gamma-1 (APL4) from Mycosarcoma maydis (Corn smut fungus).